The chain runs to 342 residues: Fructose-1,6-bisphosphatase class 1 (342 aa).

The Mg(2+) site is built by glutamate 97, aspartate 119, leucine 121, and aspartate 122. Substrate is bound by residues 122-125 (DGSS), asparagine 215, tyrosine 247, and lysine 280. Glutamate 286 lines the Mg(2+) pocket.

It belongs to the FBPase class 1 family. Homotetramer. Mg(2+) is required as a cofactor.

The protein resides in the cytoplasm. It carries out the reaction beta-D-fructose 1,6-bisphosphate + H2O = beta-D-fructose 6-phosphate + phosphate. The protein operates within carbohydrate biosynthesis; gluconeogenesis. The protein is Fructose-1,6-bisphosphatase class 1 of Leptospira interrogans serogroup Icterohaemorrhagiae serovar copenhageni (strain Fiocruz L1-130).